The following is a 463-amino-acid chain: A-type ATP synthase subunit B (463 aa).

It belongs to the ATPase alpha/beta chains family. Has multiple subunits with at least A(3), B(3), C, D, E, F, H, I and proteolipid K(x).

Its subcellular location is the cell membrane. Its function is as follows. Component of the A-type ATP synthase that produces ATP from ADP in the presence of a proton gradient across the membrane. The B chain is a regulatory subunit. This is A-type ATP synthase subunit B from Saccharolobus islandicus (strain Y.N.15.51 / Yellowstone #2) (Sulfolobus islandicus).